The following is a 330-amino-acid chain: G-protein coupled receptor 157 (330 aa).

Residues Met-1–Arg-15 are Extracellular-facing. The chain crosses the membrane as a helical span at residues Ala-16–His-36. Residues Ala-37–Arg-48 are Cytoplasmic-facing. A helical transmembrane segment spans residues Leu-49–Leu-69. The Extracellular portion of the chain corresponds to Gln-70–Thr-87. A helical membrane pass occupies residues Phe-88–Ile-108. Residues Val-109–His-119 are Cytoplasmic-facing. A helical membrane pass occupies residues Leu-120–Val-140. Residues Ser-141 to Arg-166 are Extracellular-facing. A helical membrane pass occupies residues Val-167–Leu-187. Over Leu-188–Lys-227 the chain is Cytoplasmic. Residues Leu-228–Leu-248 form a helical membrane-spanning segment. Residues Thr-249–Pro-259 are Extracellular-facing. The chain crosses the membrane as a helical span at residues Val-260–Phe-280. The Cytoplasmic portion of the chain corresponds to Val-281–Thr-330. Residues Pro-301–Thr-330 form a disordered region. Residues Glu-317–Thr-330 are compositionally biased toward basic and acidic residues.

This sequence belongs to the G-protein coupled receptor 2 family. Expressed in the primary cilia of radial glial progenitors (RGPs) in the developing neocortex.

The protein localises to the cell projection. The protein resides in the cilium membrane. Its function is as follows. Orphan receptor that promotes neuronal differentiation of radial glial progenitors (RGPs). The activity of this receptor is mediated by a G(q)-protein that activates a phosphatidylinositol-calcium second messenger. This is G-protein coupled receptor 157 (Gpr157) from Mus musculus (Mouse).